The following is a 116-amino-acid chain: CDKN2AIP N-terminal-like protein (116 aa).

M1 carries the N-acetylmethionine modification. Residues A24–S116 form the XRN2-binding (XTBD) domain.

It belongs to the CARF family. In terms of assembly, interacts with XRN2; the interaction is direct.

The protein is CDKN2AIP N-terminal-like protein (CDKN2AIPNL) of Bos taurus (Bovine).